We begin with the raw amino-acid sequence, 629 residues long: Interleukin-23 receptor (629 aa).

A signal peptide spans 1-23 (MNQVTIQWDAVIALYILFSWCHG). Over 24–355 (GITNINCSGH…LTSDNRGDIG (332 aa)) the chain is Extracellular. A glycan (N-linked (GlcNAc...) asparagine; partial) is linked at Asn-29. N-linked (GlcNAc...) asparagine glycans are attached at residues Asn-47, Asn-81, and Asn-141. Fibronectin type-III domains follow at residues 127 to 217 (IPDE…LDDI) and 219 to 318 (IPSA…TPET). Residue Asn-180 is glycosylated (N-linked (GlcNAc...) (high mannose) asparagine). Asn-232 and Asn-262 each carry an N-linked (GlcNAc...) asparagine glycan. N-linked (GlcNAc...) asparagine; partial glycosylation occurs at Asn-273. The helical transmembrane segment at 356–376 (LLLGMIVFAVMLSILSLIGIF) threads the bilayer. Residues 377–629 (NRSFRTGIKR…HFNRISLLEK (253 aa)) lie on the Cytoplasmic side of the membrane.

This sequence belongs to the type I cytokine receptor family. Type 2 subfamily. In terms of assembly, heterodimer with IL12RB1. In presence of IL23, the heterodimer forms the IL23 receptor. Interacts with JAK2 and in presence of IL23 with STAT3. In terms of processing, phosphorylated in response to IL23. In terms of tissue distribution, expressed by monocytes, Th1, Th0, NK and dendritic cells. Isoform 1 is specifically expressed in NK cells.

It is found in the cell membrane. Its function is as follows. Associates with IL12RB1 to form the interleukin-23 receptor. Binds IL23 and mediates T-cells, NK cells and possibly certain macrophage/myeloid cells stimulation probably through activation of the Jak-Stat signaling cascade. IL23 functions in innate and adaptive immunity and may participate in acute response to infection in peripheral tissues. IL23 may be responsible for autoimmune inflammatory diseases and be important for tumorigenesis. The protein is Interleukin-23 receptor (IL23R) of Homo sapiens (Human).